Consider the following 569-residue polypeptide: Proline--tRNA ligase (569 aa).

This sequence belongs to the class-II aminoacyl-tRNA synthetase family. ProS type 1 subfamily. Homodimer.

Its subcellular location is the cytoplasm. It catalyses the reaction tRNA(Pro) + L-proline + ATP = L-prolyl-tRNA(Pro) + AMP + diphosphate. Catalyzes the attachment of proline to tRNA(Pro) in a two-step reaction: proline is first activated by ATP to form Pro-AMP and then transferred to the acceptor end of tRNA(Pro). As ProRS can inadvertently accommodate and process non-cognate amino acids such as alanine and cysteine, to avoid such errors it has two additional distinct editing activities against alanine. One activity is designated as 'pretransfer' editing and involves the tRNA(Pro)-independent hydrolysis of activated Ala-AMP. The other activity is designated 'posttransfer' editing and involves deacylation of mischarged Ala-tRNA(Pro). The misacylated Cys-tRNA(Pro) is not edited by ProRS. This is Proline--tRNA ligase from Legionella pneumophila (strain Lens).